We begin with the raw amino-acid sequence, 346 residues long: MNYSSQACITAFNLAYNLVFQASNYYQMIISFCSVFPLIYFLLFKLSKSSFHGNLKTIFISYFVSLVAFSMTHLTTSTTQIIKSIISTDNCDLIISPFPHKIWNFFILFFLTLSTFFPCSVTIERYFAMETAEKYEKASVVMGPILVGFNVLLNFCIIFNMLKDESYTDGNVSFSVIPAVAAQKAFTFFIIIFFVNLVDVIFDLILLRMNLKLKLQLKNSSLAVKYQLEEVYQSTKFSVFLILIHIISFGIYVSAVVFFRYFGNLIISDPDSLFGVRTFSTTIVPTYNFVIGSFSSFFNRIKLKKSEGATIQMSSTGKSGANNYDQAIFSIWNSVSGPIDRNVTLV.

7 consecutive transmembrane segments (helical) span residues Y26–L46, T57–S77, I102–T122, S139–F159, F186–L206, V239–F259, and T278–F298.

The protein belongs to the nematode receptor-like protein srb family.

Its subcellular location is the membrane. The chain is Serpentine receptor class beta-11 (srb-11) from Caenorhabditis elegans.